The sequence spans 562 residues: Dihydroxy-acid dehydratase (562 aa).

A [2Fe-2S] cluster-binding site is contributed by Cys-53. Residue Asp-85 participates in Mg(2+) binding. [2Fe-2S] cluster is bound at residue Cys-126. Positions 127 and 128 each coordinate Mg(2+). An N6-carboxylysine modification is found at Lys-128. Position 198 (Cys-198) interacts with [2Fe-2S] cluster. Position 449 (Glu-449) interacts with Mg(2+). Residue Ser-475 is the Proton acceptor of the active site.

It belongs to the IlvD/Edd family. In terms of assembly, homodimer. [2Fe-2S] cluster is required as a cofactor. It depends on Mg(2+) as a cofactor.

The enzyme catalyses (2R)-2,3-dihydroxy-3-methylbutanoate = 3-methyl-2-oxobutanoate + H2O. It catalyses the reaction (2R,3R)-2,3-dihydroxy-3-methylpentanoate = (S)-3-methyl-2-oxopentanoate + H2O. It participates in amino-acid biosynthesis; L-isoleucine biosynthesis; L-isoleucine from 2-oxobutanoate: step 3/4. It functions in the pathway amino-acid biosynthesis; L-valine biosynthesis; L-valine from pyruvate: step 3/4. Functions in the biosynthesis of branched-chain amino acids. Catalyzes the dehydration of (2R,3R)-2,3-dihydroxy-3-methylpentanoate (2,3-dihydroxy-3-methylvalerate) into 2-oxo-3-methylpentanoate (2-oxo-3-methylvalerate) and of (2R)-2,3-dihydroxy-3-methylbutanoate (2,3-dihydroxyisovalerate) into 2-oxo-3-methylbutanoate (2-oxoisovalerate), the penultimate precursor to L-isoleucine and L-valine, respectively. This Methylococcus capsulatus (strain ATCC 33009 / NCIMB 11132 / Bath) protein is Dihydroxy-acid dehydratase.